Consider the following 578-residue polypeptide: Longifolene synthase (578 aa).

The Mg(2+) site is built by aspartate 331, aspartate 335, and aspartate 475. Residues 331–335 (DDLYD) carry the DDXXD motif motif.

The protein belongs to the terpene synthase family. Tpsd subfamily. It depends on Mg(2+) as a cofactor. The cofactor is Mn(2+).

The protein resides in the cytoplasm. It catalyses the reaction (2E,6E)-farnesyl diphosphate = longifolene + diphosphate. It functions in the pathway sesquiterpene biosynthesis. The protein operates within terpene metabolism; oleoresin biosynthesis. Involved in defensive oleoresin formation in conifers in response to insect attack or other injury. Involved in sesquiterpene (C15) olefins biosynthesis. Produces mainly longifolene, but also multiple minor products including alpha-longipinene, alpha-longicyclene, E-beta-farnesene, longiborneol, cyclosativene, beta-longipinene, and 12 other sesquiterpenes when used with farnesyl diphosphate (FPP) as substrate. The chain is Longifolene synthase (TPS-Lon) from Picea abies (Norway spruce).